The primary structure comprises 481 residues: 6-phosphogluconate dehydrogenase, decarboxylating (481 aa).

NADP(+) contacts are provided by residues 11–16, 34–36, 76–78, and N104; these read GLAVMG, NRT, and VKG. Substrate-binding positions include N104 and 130-132; that span reads SGG. K184 acts as the Proton acceptor in catalysis. 187–188 serves as a coordination point for substrate; that stretch reads HN. The active-site Proton donor is the E191. Substrate is bound by residues Y192, K259, R286, R445, and H451.

It belongs to the 6-phosphogluconate dehydrogenase family. Homodimer.

The enzyme catalyses 6-phospho-D-gluconate + NADP(+) = D-ribulose 5-phosphate + CO2 + NADPH. It participates in carbohydrate degradation; pentose phosphate pathway; D-ribulose 5-phosphate from D-glucose 6-phosphate (oxidative stage): step 3/3. Catalyzes the oxidative decarboxylation of 6-phosphogluconate to ribulose 5-phosphate and CO(2), with concomitant reduction of NADP to NADPH. The chain is 6-phosphogluconate dehydrogenase, decarboxylating (Pgd) from Drosophila simulans (Fruit fly).